Consider the following 304-residue polypeptide: MAPELIQIDLEPRKPAPKPSWLRAKAPMGENYHDLKKLARGMNLHTVCESAQCPNIGECWNHKTATFMLLGNLCTRRCGFCAVPKGRPEPIDFDEPRRVAEAVATLGLNFAVVTSVNRDDDNVGAAQVFAQTIEQIREQKPGCRVEVLIPDFQGNDESLRIVLAAKPEILNHNTETVPRLYRAVRSGARYERTLNLLRRAKEINPAQVTKTGVMVGLGETTEELLHVYRDLARQNVDILTIGQYLRPSKDHAPMTRYYTPEEFLFMKEEAMKMGFRHVESGPLVRSSYHAHEQANSTKQPLVTI.

The disordered stretch occupies residues Met1–Trp21. [4Fe-4S] cluster is bound by residues Cys48, Cys53, Cys59, Cys74, Cys78, Cys81, and Ser287. A Radical SAM core domain is found at Trp60–Arg276.

This sequence belongs to the radical SAM superfamily. Lipoyl synthase family. [4Fe-4S] cluster serves as cofactor.

The protein resides in the cytoplasm. The enzyme catalyses [[Fe-S] cluster scaffold protein carrying a second [4Fe-4S](2+) cluster] + N(6)-octanoyl-L-lysyl-[protein] + 2 oxidized [2Fe-2S]-[ferredoxin] + 2 S-adenosyl-L-methionine + 4 H(+) = [[Fe-S] cluster scaffold protein] + N(6)-[(R)-dihydrolipoyl]-L-lysyl-[protein] + 4 Fe(3+) + 2 hydrogen sulfide + 2 5'-deoxyadenosine + 2 L-methionine + 2 reduced [2Fe-2S]-[ferredoxin]. Its pathway is protein modification; protein lipoylation via endogenous pathway; protein N(6)-(lipoyl)lysine from octanoyl-[acyl-carrier-protein]: step 2/2. Functionally, catalyzes the radical-mediated insertion of two sulfur atoms into the C-6 and C-8 positions of the octanoyl moiety bound to the lipoyl domains of lipoate-dependent enzymes, thereby converting the octanoylated domains into lipoylated derivatives. This Koribacter versatilis (strain Ellin345) protein is Lipoyl synthase.